Reading from the N-terminus, the 337-residue chain is Ornithine carbamoyltransferase, catabolic (337 aa).

Carbamoyl phosphate is bound by residues 58–61, Q85, R109, and 135–138; these read STRT and HPTQ. Residues N167, D231, and 235–236 contribute to the L-ornithine site; that span reads SM. Residues 272 to 273 and R317 each bind carbamoyl phosphate; that span reads CL.

Belongs to the aspartate/ornithine carbamoyltransferase superfamily. OTCase family.

The protein resides in the cytoplasm. It catalyses the reaction carbamoyl phosphate + L-ornithine = L-citrulline + phosphate + H(+). Its pathway is amino-acid degradation; L-arginine degradation via ADI pathway; carbamoyl phosphate from L-arginine: step 2/2. Functionally, reversibly catalyzes the transfer of the carbamoyl group from carbamoyl phosphate (CP) to the N(epsilon) atom of ornithine (ORN) to produce L-citrulline. The polypeptide is Ornithine carbamoyltransferase, catabolic (arcB) (Latilactobacillus sakei (Lactobacillus sakei)).